The sequence spans 453 residues: AP-4 complex subunit mu-1 (453 aa).

The 269-residue stretch at 184–452 folds into the MHD domain; sequence KNEVFLDVVE…LSHSDAYVIR (269 aa).

Belongs to the adaptor complexes medium subunit family. Adaptor protein complex 4 (AP-4) is a heterotetramer composed of two large adaptins (epsilon-type subunit AP4E1 and beta-type subunit AP4B1), a medium adaptin (mu-type subunit AP4M1) and a small adaptin (sigma-type AP4S1). Interacts with tyrosine-based sorting signals on the cytoplasmic tail of cargo proteins such as APP, ATG9A, LAMP2 and NAGPA. Interacts with the C-terminal domain of GRID2. Interacts with GRIA1 and GRIA2; the interaction is indirect via CACNG3. Interacts with CACNG3; CACNG3 associates GRIA1 and GRIA2 with the adaptor protein complex 4 (AP-4) to target them to the somatodendritic compartment of neurons. Interacts with HOOK1 and HOOK2; the interactions are direct, mediate the interaction between FTS-Hook-FHIP (FHF) complex and AP-4 and the perinuclear distribution of AP-4. In terms of tissue distribution, ubiquitous. Highly expressed in testis and lowly expressed in brain and lung.

It is found in the golgi apparatus. The protein localises to the trans-Golgi network membrane. The protein resides in the early endosome. Functionally, component of the adaptor protein complex 4 (AP-4). Adaptor protein complexes are vesicle coat components involved both in vesicle formation and cargo selection. They control the vesicular transport of proteins in different trafficking pathways. AP-4 forms a non clathrin-associated coat on vesicles departing the trans-Golgi network (TGN) and may be involved in the targeting of proteins from the trans-Golgi network (TGN) to the endosomal-lysosomal system. It is also involved in protein sorting to the basolateral membrane in epithelial cells and the proper asymmetric localization of somatodendritic proteins in neurons. Within AP-4, the mu-type subunit AP4M1 is directly involved in the recognition and binding of tyrosine-based sorting signals found in the cytoplasmic part of cargos. The adaptor protein complex 4 (AP-4) may also recognize other types of sorting signal. The polypeptide is AP-4 complex subunit mu-1 (Homo sapiens (Human)).